The chain runs to 549 residues: Glucose-6-phosphate isomerase (549 aa).

The Proton donor role is filled by Glu-353. Active-site residues include His-384 and Lys-512.

Belongs to the GPI family.

The protein resides in the cytoplasm. The enzyme catalyses alpha-D-glucose 6-phosphate = beta-D-fructose 6-phosphate. It participates in carbohydrate biosynthesis; gluconeogenesis. Its pathway is carbohydrate degradation; glycolysis; D-glyceraldehyde 3-phosphate and glycerone phosphate from D-glucose: step 2/4. Functionally, catalyzes the reversible isomerization of glucose-6-phosphate to fructose-6-phosphate. This is Glucose-6-phosphate isomerase from Solidesulfovibrio magneticus (strain ATCC 700980 / DSM 13731 / RS-1) (Desulfovibrio magneticus).